The following is an 836-amino-acid chain: Hypoxia-inducible factor 1-alpha (836 aa).

The interval 1–30 is disordered; it reads MEGAGGENEKKKMSSERRKEKSRDAARSRR. The interaction with TSGA10 stretch occupies residues 1–401; the sequence is MEGAGGENEK…KEPDALTLLA (401 aa). Over residues 7–30 the composition is skewed to basic and acidic residues; sequence ENEKKKMSSERRKEKSRDAARSRR. The 54-residue stretch at 17-70 folds into the bHLH domain; the sequence is RRKEKSRDAARSRRSKESEVFYELAHQLPLPHNVSSHLDKASVMRLTISYLRVR. The segment at 21-30 is DNA-binding; it reads KSRDAARSRR. The region spanning 80 to 155 is the PAS 1 domain; sequence SEDEMKAQMD…EMLTHRNGPV (76 aa). Positions 170 to 191 are required for heterodimer formation with ARNT; it reads RMKCTLTSRGRTMNIKSATWKV. A PAS 2 domain is found at 228 to 298; sequence PHPSNIEIPL…KTHHDMFTKG (71 aa). The residue at position 247 (Ser-247) is a Phosphoserine; by CK1. Positions 302 to 345 constitute a PAC domain; that stretch reads TGQYRMLAKRGGYVWVETQATVIYNTKNSQPQCIVCVNYVVSGI. The N-terminal VHL recognition site stretch occupies residues 380–417; that stretch reads SEDTSCLFDKLKKEPDALTLLAPAAGDTIISLDFGSDD. Lys-391 participates in a covalent cross-link: Glycyl lysine isopeptide (Lys-Gly) (interchain with G-Cter in SUMO). The tract at residues 401–613 is ODD; that stretch reads APAAGDTIIS…PSMSTVTGFQ (213 aa). Pro-402 carries the post-translational modification 4-hydroxyproline. Residue Lys-476 forms a Glycyl lysine isopeptide (Lys-Gly) (interchain with G-Cter in SUMO) linkage. The disordered stretch occupies residues 492–511; the sequence is QIQDQPASPSDGSTRQSSPE. The interval 544 to 588 is NTAD; the sequence is FKLELVEKLFAEDTEAKNPFSTQDTDLDLEMLAPYIPMDDDFQLR. An N6-acetyllysine; alternate modification is found at Lys-545. Residues Lys-545, Lys-551, and Lys-560 each participate in a glycyl lysine isopeptide (Lys-Gly) (interchain with G-Cter in ubiquitin) cross-link. Lys-545 participates in a covalent cross-link: Glycyl lysine isopeptide (Lys-Gly) (interchain with G-Cter in ubiquitin); alternate. Ser-564 carries the post-translational modification Phosphoserine; by GSK3-beta. Thr-568 carries the phosphothreonine; by GSK3-beta modification. Residues 569–585 are C-terminal VHL recognition site; the sequence is DLDLEMLAPYIPMDDDF. Pro-577 is subject to 4-hydroxyproline. Phosphoserine; by PLK3 is present on Ser-589. The interval 589–795 is ID; it reads SFDQLSPLES…SDLACRLLGQ (207 aa). Disordered regions lie at residues 593–684 and 707–734; these read LSPL…DRAG and QRNT…KMEH. A Phosphoserine; by GSK3-beta modification is found at Ser-602. Polar residues predominate over residues 608 to 620; sequence TVTGFQQTQLQKP. Positions 621–632 are enriched in low complexity; that stretch reads TITATATTTATT. Residues 633 to 647 are compositionally biased toward basic and acidic residues; it reads DESKTETKDNKEDIK. Polar residues predominate over residues 652-678; sequence SPSSTQVPQETTTAKASAYSGTHSRTA. Ser-668 is subject to Phosphoserine; by PLK3. Lys-719 carries the post-translational modification N6-acetyllysine. The short motif at 728–731 is the Nuclear localization signal element; that stretch reads RKRK. The segment at 796 to 836 is CTAD; sequence SMDESGLPQLTSYDCEVNAPIQGSRNLLQGEELLRALDQVN. Cys-810 bears the S-nitrosocysteine mark. Asn-813 is modified ((3S)-3-hydroxyasparagine).

Interacts with the ARNT; forms a heterodimer that binds core DNA sequence 5'-TACGTG-3' within the hypoxia response element (HRE) of target gene promoters. Interacts with COPS5; the interaction increases the transcriptional activity of HIF1A through increased stability. Interacts with EP300 (via TAZ-type 1 domains); the interaction is stimulated in response to hypoxia and inhibited by CITED2. Interacts with CREBBP (via TAZ-type 1 domains). Interacts with NCOA1, NCOA2, APEX1 and HSP90. Interacts (hydroxylated within the ODD domain) with VHLL (via beta domain); the interaction, leads to polyubiquitination and subsequent HIF1A proteasomal degradation. During hypoxia, sumoylated HIF1A also binds VHL; the interaction promotes the ubiquitination of HIF1A. Interacts with SENP1; the interaction desumoylates HIF1A resulting in stabilization and activation of transcription. Interacts (via the ODD domain) with NAA10; the interaction appears not to acetylate HIF1A nor have any affect on protein stability, during hypoxia. Interacts with RWDD3; the interaction enhances HIF1A sumoylation. Interacts with TSGA10. Interacts with HIF3A. Interacts with RORA (via the DNA binding domain); the interaction enhances HIF1A transcription under hypoxia through increasing protein stability. Interaction with PSMA7 inhibits the transactivation activity of HIF1A under both normoxic and hypoxia-mimicking conditions. Interacts with USP20. Interacts with RACK1; promotes HIF1A ubiquitination and proteasome-mediated degradation. Interacts (via N-terminus) with USP19. Interacts with SIRT2. Interacts (deacetylated form) with EGLN1. Interacts with CBFA2T3. Interacts with HSP90AA1 and HSP90AB1. Interacts with DCUN1D1; this interaction increases the interaction between VHL and DCUN1D1. Interacts with HIF1AN. In terms of processing, S-nitrosylation of Cys-810 may be responsible for increased recruitment of p300 coactivator necessary for transcriptional activity of HIF-1 complex. Post-translationally, requires phosphorylation for DNA-binding. Phosphorylation at Ser-247 by CSNK1D/CK1 represses kinase activity and impairs ARNT binding. Phosphorylation by GSK3-beta and PLK3 promote degradation by the proteasome. Sumoylated; with SUMO1 under hypoxia. Sumoylation is enhanced through interaction with RWDD3. Both sumoylation and desumoylation seem to be involved in the regulation of its stability during hypoxia. Sumoylation can promote either its stabilization or its VHL-dependent degradation by promoting hydroxyproline-independent HIF1A-VHL complex binding, thus leading to HIF1A ubiquitination and proteasomal degradation. Desumoylation by SENP1 increases its stability amd transcriptional activity. There is a disaccord between various publications on the effect of sumoylation and desumoylation on its stability and transcriptional activity. In terms of processing, acetylation of Lys-545 by ARD1 increases interaction with VHL and stimulates subsequent proteasomal degradation. Deacetylation of Lys-719 by SIRT2 increases its interaction with and hydroxylation by EGLN1 thereby inactivating HIF1A activity by inducing its proteasomal degradation. Post-translationally, ubiquitinated; in normoxia, following hydroxylation and interaction with VHL. Lys-545 appears to be the principal site of ubiquitination. Clioquinol, the Cu/Zn-chelator, inhibits ubiquitination through preventing hydroxylation at Asn-813. Ubiquitinated by E3 ligase VHL. Deubiquitinated by UCHL1. The iron and 2-oxoglutarate dependent 3-hydroxylation of asparagine is (S) stereospecific within HIF CTAD domains. In terms of processing, in normoxia, is hydroxylated on Pro-402 and Pro-577 in the oxygen-dependent degradation domain (ODD) by EGLN1/PHD2 and EGLN2/PHD1. EGLN3/PHD3 has also been shown to hydroxylate Pro-577. The hydroxylated prolines promote interaction with VHL, initiating rapid ubiquitination and subsequent proteasomal degradation. Deubiquitinated by USP20. Under hypoxia, proline hydroxylation is impaired and ubiquitination is attenuated, resulting in stabilization. In normoxia, is hydroxylated on Asn-813 by HIF1AN, thus abrogating interaction with CREBBP and EP300 and preventing transcriptional activation. Repressed by iron ion, via Fe(2+) prolyl hydroxylase (PHD) enzymes-mediated hydroxylation and subsequent proteasomal degradation. Ubiquitous.

It localises to the cytoplasm. It is found in the nucleus. Its subcellular location is the nucleus speckle. With respect to regulation, induced by reactive oxygen species (ROS). Functions as a master transcriptional regulator of the adaptive response to hypoxia. Under hypoxic conditions, activates the transcription of over 40 genes, including erythropoietin, glucose transporters, glycolytic enzymes, vascular endothelial growth factor, HILPDA, and other genes whose protein products increase oxygen delivery or facilitate metabolic adaptation to hypoxia. Plays an essential role in embryonic vascularization, tumor angiogenesis and pathophysiology of ischemic disease. Heterodimerizes with ARNT; heterodimer binds to core DNA sequence 5'-TACGTG-3' within the hypoxia response element (HRE) of target gene promoters. Activation requires recruitment of transcriptional coactivators such as CREBBP and EP300. Activity is enhanced by interaction with NCOA1 and/or NCOA2. Interaction with redox regulatory protein APEX1 seems to activate CTAD and potentiates activation by NCOA1 and CREBBP. Involved in the axonal distribution and transport of mitochondria in neurons during hypoxia. The sequence is that of Hypoxia-inducible factor 1-alpha (Hif1a) from Mus musculus (Mouse).